The following is a 125-amino-acid chain: MSKVQEVIDIVKQMTVLELSELVKALEEEFGVSAAAPVAVAAAPAAGAVAEAVEEQYEFDVILTSSGEKKINVIKVVREITGLGLKEAKTLVDECPNPVKEKITKEEANEIKAKIEEAGGSVEVK.

Belongs to the bacterial ribosomal protein bL12 family. In terms of assembly, homodimer. Part of the ribosomal stalk of the 50S ribosomal subunit. Forms a multimeric L10(L12)X complex, where L10 forms an elongated spine to which 2 to 4 L12 dimers bind in a sequential fashion. Binds GTP-bound translation factors.

Functionally, forms part of the ribosomal stalk which helps the ribosome interact with GTP-bound translation factors. Is thus essential for accurate translation. The chain is Large ribosomal subunit protein bL12 from Syntrophomonas wolfei subsp. wolfei (strain DSM 2245B / Goettingen).